Reading from the N-terminus, the 181-residue chain is Regulator of G-protein signaling 5 (181 aa).

In terms of domain architecture, RGS spans 64–180 (SLDKLLQNNY…VRSEFYQEFI (117 aa)).

It localises to the cytoplasm. It is found in the membrane. In terms of biological role, inhibits signal transduction by increasing the GTPase activity of G protein alpha subunits thereby driving them into their inactive GDP-bound form. Binds to G(i)-alpha and G(o)-alpha, but not to G(s)-alpha. This is Regulator of G-protein signaling 5 (RGS5) from Bos taurus (Bovine).